Reading from the N-terminus, the 43-residue chain is Plasma membrane ATPase proteolipid 2 (43 aa).

Positions 1 to 5 (MLMST) are excised as a propeptide. A helical membrane pass occupies residues 9–29 (GVILVFILVGLACIAIISTII). The Cytoplasmic segment spans residues 30–43 (YRKWQARQRGLQRF).

In terms of assembly, monomer and homodimer. Associated with the 100 kDa subunit of the plasma membrane H(+)-ATPase.

The protein resides in the cell membrane. This Saccharomyces cerevisiae (strain ATCC 204508 / S288c) (Baker's yeast) protein is Plasma membrane ATPase proteolipid 2 (PMP2).